Here is a 1006-residue protein sequence, read N- to C-terminus: DNA polymerase (1006 aa).

Belongs to the DNA polymerase type-B family. Interacts with OPG148/A20. Component of the Uracil-DNA glycosylase(UDG)-OPG148/A20-polymerase complex; OPG148/A20 and OPG116/UDG form a heterodimeric processivity factor that associates with OPG071/E9 to form the processive polymerase holoenzyme.

The catalysed reaction is DNA(n) + a 2'-deoxyribonucleoside 5'-triphosphate = DNA(n+1) + diphosphate. Its function is as follows. Catalyzes DNA synthesis. Acquires processivity by associating with a heterodimeric processivity factor comprised of the viral OPG148/A20 and OPG116/D4 proteins, thereby forming the DNA polymerase holoenzyme. Displays 3'- to 5' exonuclease activity. Might participate in viral DNA recombination. Does not perform OPG116/D4synthesis across an abasic site. The sequence is that of DNA polymerase (OPG071) from Bos taurus (Bovine).